The primary structure comprises 389 residues: Apoptosis inhibitor U19 (389 aa).

The protein belongs to the beta-herpesvirinae UL38 protein family. Interacts with host MDM2; this interaction leads to the stabilization of host TP53.

It localises to the host cytoplasm. The protein resides in the host nucleus. Plays a role in the inhibition of host apoptosis to facilitate efficient viral replication. Promotes stabilization and inactivation of host TP53 through interaction with host MDM2. This Homo sapiens (Human) protein is Apoptosis inhibitor U19 (U19).